A 259-amino-acid polypeptide reads, in one-letter code: Tryptophan synthase alpha chain (259 aa).

Residues Glu35 and Asp46 each act as proton acceptor in the active site.

Belongs to the TrpA family. As to quaternary structure, tetramer of two alpha and two beta chains.

The enzyme catalyses (1S,2R)-1-C-(indol-3-yl)glycerol 3-phosphate + L-serine = D-glyceraldehyde 3-phosphate + L-tryptophan + H2O. It participates in amino-acid biosynthesis; L-tryptophan biosynthesis; L-tryptophan from chorismate: step 5/5. The alpha subunit is responsible for the aldol cleavage of indoleglycerol phosphate to indole and glyceraldehyde 3-phosphate. In Methanococcus vannielii (strain ATCC 35089 / DSM 1224 / JCM 13029 / OCM 148 / SB), this protein is Tryptophan synthase alpha chain.